The sequence spans 644 residues: Low affinity sulfate transporter 3 (644 aa).

Residues 1–19 (MSSLGTEQFSERSQWVLNS) show a composition bias toward polar residues. A disordered region spans residues 1–20 (MSSLGTEQFSERSQWVLNSP). 13 helical membrane-spanning segments follow: residues 50–70 (AVSF…YSAT), 76–96 (LLSG…YANL), 99–119 (LDPQ…ALMG), 124–144 (IAIG…PKVI), 156–176 (LVFT…VLRL), 179–199 (LVDF…AIVI), 242–262 (PLNF…RFIG), 268–288 (FFWL…LIVF), 328–348 (IGLI…RSFA), 394–414 (CKTA…LELF), 418–438 (LYYT…PGLI), 455–475 (LACL…GLLI), and 518–538 (PGIL…AGFV). The STAS domain maps to 511–635 (YPMAVTTPGI…LTVAEAVDAC (125 aa)).

The protein belongs to the SLC26A/SulP transporter (TC 2.A.53) family.

It is found in the membrane. Low-affinity H(+)/sulfate cotransporter which may be involved in the internal transport of sulfate between cellular or subcellular compartments within the plant. The polypeptide is Low affinity sulfate transporter 3 (ST3) (Stylosanthes hamata (Caribbean stylo)).